A 249-amino-acid chain; its full sequence is Vesicle-associated membrane protein-associated protein A (249 aa).

A2 is modified (N-acetylalanine). Over 2 to 227 (ASASGTMAKH…VSFRENVTSP (226 aa)) the chain is Cytoplasmic. Positions 14 to 131 (ILVLDPPTDL…MDSKLRCVFE (118 aa)) constitute an MSP domain. Residues 50–53 (KVKT) form a phosphorylated FFAT motif binding region. An N6-acetyllysine modification is found at K125. S166 carries the post-translational modification Phosphoserine. The stretch at 169–205 (DTETRKLVEECKRLQGEMMKLSEENRLLRDEGLRLRK) forms a coiled coil. T170 is subject to Phosphothreonine. A phosphoserine mark is found at S214, S216, and S219. A helical; Anchor for type IV membrane protein membrane pass occupies residues 228-248 (LPSLLVVIAAIFIGFFLGKFI).

The protein belongs to the VAMP-associated protein (VAP) (TC 9.B.17) family. As to quaternary structure, homodimer; disulfide-linked. Heterodimer with VAPB. Interacts with VAMP1, VAMP2, STX1A, BET1, SEC22C and with the C-terminal domain of OCLN. Interacts (via MSP domain) with OSBPL1A (via FFAT motif). Interacts (via MSP domain) with ZFYVE27; may retain ZFYVE27 in the endoplasmic reticulum and regulate its function in cell projections formation. Interacts with OSBP. Interacts (via C-terminus) with RSAD2/viperin (via C-terminus). Interacts with IFITM3. Interacts with OSBPL3 (phosphorylated form). Interacts with KIF5A in a ZFYVE27-dependent manner. Interacts (via MSP domain) with STARD3 (via phosphorylated FFAT motif); this interaction recruits VAPA to the endosome. Interacts with STARD3NL (via FFAT motif). Interacts with CERT1. Interacts with PLEKHA3 and SACM1L to form a ternary complex. Interacts with VPS13A (via FFAT motif). Interacts with RB1CC1 (via phosphorylated FFAT motif), MIGA2 (via phosphorylated FFAT motif), RMDN3 (via phosphorylated FFAT motif), KCNB1 (via phosphorylated FFAT motif) and KCNB2 (via phosphorylated FFAT motif). Interacts (via MSP domain) with WDR44 (via FFAT-like motif); the interactions connect the endoplasmic reticulum (ER) with the endosomal tubule.

The protein localises to the endoplasmic reticulum membrane. The protein resides in the cell junction. It localises to the tight junction. Its subcellular location is the cell membrane. In terms of biological role, endoplasmic reticulum (ER)-anchored protein that mediates the formation of contact sites between the ER and endosomes via interaction with FFAT motif-containing proteins such as STARD3 or WDR44. STARD3-VAPA interaction enables cholesterol transfer from the ER to endosomes. Via interaction with WDR44 participates in neosynthesized protein export. In addition, recruited to the plasma membrane through OSBPL3 binding. The OSBPL3-VAPA complex stimulates RRAS signaling which in turn attenuates integrin beta-1 (ITGB1) activation at the cell surface. With OSBPL3, may regulate ER morphology. May play a role in vesicle trafficking. This chain is Vesicle-associated membrane protein-associated protein A, found in Bos taurus (Bovine).